The primary structure comprises 164 residues: MIRKVLLSVLLAVLMTINLGQASPEVMKNLCMNYGKAMDQCKQELNLPDSVIADLYNFWKDDYVMTDRLAGCAINCLSTKLDIVDPDGNLHHGNAKEFAMKHGADDGMAHELVDIIHGCEKSSPPNDDKCIKTMDIAMCFKKEIHKLNWVPNMDLVVGEVLAEV.

A signal peptide spans 1-22 (MIRKVLLSVLLAVLMTINLGQA). Cystine bridges form between C41-C76, C72-C130, and C119-C139.

This sequence belongs to the PBP/GOBP family. Antenna.

Functionally, this major soluble protein in olfactory sensilla of male moths might serve to solubilize the extremely hydrophobic pheromone molecules and to transport pheromone through the aqueous lymph to receptors located on olfactory cilia. The protein is Pheromone-binding protein 2 of Antheraea pernyi (Chinese oak silk moth).